The sequence spans 181 residues: HGPRTase-like protein 2 (181 aa).

Belongs to the purine/pyrimidine phosphoribosyltransferase family. Archaeal HPRT subfamily.

Functionally, may catalyze a purine salvage reaction, the substrate is unknown. This is HGPRTase-like protein 2 from Haloterrigena turkmenica (strain ATCC 51198 / DSM 5511 / JCM 9101 / NCIMB 13204 / VKM B-1734 / 4k) (Halococcus turkmenicus).